A 197-amino-acid polypeptide reads, in one-letter code: Recombination protein RecR (197 aa).

Residues 57 to 72 (CSVCFGITEEDPCRLC) form a C4-type zinc finger. A Toprim domain is found at 79 to 174 (TSLCVVEEPQ…RVTRLAHGIP (96 aa)).

The protein belongs to the RecR family.

Functionally, may play a role in DNA repair. It seems to be involved in an RecBC-independent recombinational process of DNA repair. It may act with RecF and RecO. The protein is Recombination protein RecR of Geobacter metallireducens (strain ATCC 53774 / DSM 7210 / GS-15).